Consider the following 340-residue polypeptide: N-acetyl-gamma-glutamyl-phosphate reductase (340 aa).

Cysteine 146 is an active-site residue.

The protein belongs to the NAGSA dehydrogenase family. Type 1 subfamily.

The protein resides in the cytoplasm. The enzyme catalyses N-acetyl-L-glutamate 5-semialdehyde + phosphate + NADP(+) = N-acetyl-L-glutamyl 5-phosphate + NADPH + H(+). It participates in amino-acid biosynthesis; L-arginine biosynthesis; N(2)-acetyl-L-ornithine from L-glutamate: step 3/4. In terms of biological role, catalyzes the NADPH-dependent reduction of N-acetyl-5-glutamyl phosphate to yield N-acetyl-L-glutamate 5-semialdehyde. The chain is N-acetyl-gamma-glutamyl-phosphate reductase from Streptococcus sanguinis (strain SK36).